Here is a 137-residue protein sequence, read N- to C-terminus: Protein apnoia (137 aa).

The next 3 membrane-spanning stretches (helical) occupy residues 7–27 (IVFA…QQQA), 55–75 (LVPG…LTVV), and 76–96 (SIKG…QMLS).

In terms of assembly, interacts with crb.

The protein resides in the apical cell membrane. Functionally, transmembrane protein that plays a key role in trachea development by regulating crb localization and maintenance at the apical cell membrane. Required for anisotropic apical surface expansion important for tracheal tube elongation and lumen stability at larval stages. This is Protein apnoia from Drosophila melanogaster (Fruit fly).